The primary structure comprises 111 residues: MHGERPTLGDIVLDLQPEPVSLSCNEQLDSSDSEDDHEQDQLDSSHNRQREQPTQQDLQVNLQSFKIVTHCVFCHCLVRLVVHCTATDIRQVHQLLMGTLNIVCPNCAATA.

Positions Met1–Ser44 are E7 terminal domain. The LXCXE motif; interaction with host RB1 and TMEM173/STING signature appears at Leu22–Glu26. Residues Cys24–Gln55 form a disordered region. Acidic residues predominate over residues Asp29–Glu38. The span at Gln39–Glu51 shows a compositional bias: basic and acidic residues. A zinc finger spans residues Cys71–Cys107. Residues Ile89–Met97 carry the Nuclear export signal motif.

Belongs to the papillomaviridae E7 protein family. In terms of assembly, homodimer. Homooligomer. Interacts with host RB1; this interaction induces dissociation of RB1-E2F1 complex thereby disrupting RB1 activity. Interacts with host EP300; this interaction represses EP300 transcriptional activity. Interacts with protein E2; this interaction inhibits E7 oncogenic activity. Interacts with host TMEM173/STING; this interaction impairs the ability of TMEM173/STING to sense cytosolic DNA and promote the production of type I interferon (IFN-alpha and IFN-beta). Post-translationally, highly phosphorylated.

Its subcellular location is the host cytoplasm. The protein resides in the host nucleus. In terms of biological role, plays a role in viral genome replication by driving entry of quiescent cells into the cell cycle. Stimulation of progression from G1 to S phase allows the virus to efficiently use the cellular DNA replicating machinery to achieve viral genome replication. E7 protein has both transforming and trans-activating activities. Induces the disassembly of the E2F1 transcription factor from RB1, with subsequent transcriptional activation of E2F1-regulated S-phase genes. Interferes with host histone deacetylation mediated by HDAC1 and HDAC2, leading to transcription activation. Also plays a role in the inhibition of both antiviral and antiproliferative functions of host interferon alpha. Interaction with host TMEM173/STING impairs the ability of TMEM173/STING to sense cytosolic DNA and promote the production of type I interferon (IFN-alpha and IFN-beta). The sequence is that of Protein E7 from Human papillomavirus 7.